Reading from the N-terminus, the 208-residue chain is Ribosomal RNA large subunit methyltransferase E (208 aa).

S-adenosyl-L-methionine-binding residues include G62, W64, D82, D98, and D123. Catalysis depends on K163, which acts as the Proton acceptor.

Belongs to the class I-like SAM-binding methyltransferase superfamily. RNA methyltransferase RlmE family.

It localises to the cytoplasm. It carries out the reaction uridine(2552) in 23S rRNA + S-adenosyl-L-methionine = 2'-O-methyluridine(2552) in 23S rRNA + S-adenosyl-L-homocysteine + H(+). Specifically methylates the uridine in position 2552 of 23S rRNA at the 2'-O position of the ribose in the fully assembled 50S ribosomal subunit. The protein is Ribosomal RNA large subunit methyltransferase E of Actinobacillus succinogenes (strain ATCC 55618 / DSM 22257 / CCUG 43843 / 130Z).